The chain runs to 204 residues: ATP phosphoribosyltransferase (204 aa).

The protein belongs to the ATP phosphoribosyltransferase family. Short subfamily. In terms of assembly, heteromultimer composed of HisG and HisZ subunits.

Its subcellular location is the cytoplasm. It carries out the reaction 1-(5-phospho-beta-D-ribosyl)-ATP + diphosphate = 5-phospho-alpha-D-ribose 1-diphosphate + ATP. Its pathway is amino-acid biosynthesis; L-histidine biosynthesis; L-histidine from 5-phospho-alpha-D-ribose 1-diphosphate: step 1/9. In terms of biological role, catalyzes the condensation of ATP and 5-phosphoribose 1-diphosphate to form N'-(5'-phosphoribosyl)-ATP (PR-ATP). Has a crucial role in the pathway because the rate of histidine biosynthesis seems to be controlled primarily by regulation of HisG enzymatic activity. The protein is ATP phosphoribosyltransferase of Campylobacter concisus (strain 13826).